A 185-amino-acid chain; its full sequence is Ribosome-recycling factor (185 aa).

Belongs to the RRF family.

The protein resides in the cytoplasm. Functionally, responsible for the release of ribosomes from messenger RNA at the termination of protein biosynthesis. May increase the efficiency of translation by recycling ribosomes from one round of translation to another. In Alcanivorax borkumensis (strain ATCC 700651 / DSM 11573 / NCIMB 13689 / SK2), this protein is Ribosome-recycling factor.